The sequence spans 154 residues: UPF0756 membrane protein YtwI (154 aa).

A run of 4 helical transmembrane segments spans residues Phe8–Val28, Trp54–Phe74, Trp87–Leu107, and Leu117–Ile137.

It belongs to the UPF0756 family.

The protein resides in the cell membrane. This Bacillus subtilis (strain 168) protein is UPF0756 membrane protein YtwI (ytwI).